The following is a 198-amino-acid chain: NAD(P)H dehydrogenase (quinone) (198 aa).

The region spanning 4–189 (ILVLYYSMYG…SIARYQGEYV (186 aa)) is the Flavodoxin-like domain. Residues 10-15 (SMYGHI) and 78-80 (TRF) contribute to the FMN site. NAD(+) is bound at residue Y12. W98 is a binding site for substrate. FMN-binding positions include 113–118 (STGTGG) and H133.

It belongs to the WrbA family. The cofactor is FMN.

The catalysed reaction is a quinone + NADH + H(+) = a quinol + NAD(+). It catalyses the reaction a quinone + NADPH + H(+) = a quinol + NADP(+). The polypeptide is NAD(P)H dehydrogenase (quinone) (Salmonella typhi).